We begin with the raw amino-acid sequence, 140 residues long: Large ribosomal subunit protein uL11 (140 aa).

This sequence belongs to the universal ribosomal protein uL11 family. As to quaternary structure, part of the ribosomal stalk of the 50S ribosomal subunit. Interacts with L10 and the large rRNA to form the base of the stalk. L10 forms an elongated spine to which L12 dimers bind in a sequential fashion forming a multimeric L10(L12)X complex. One or more lysine residues are methylated.

Forms part of the ribosomal stalk which helps the ribosome interact with GTP-bound translation factors. This chain is Large ribosomal subunit protein uL11, found in Staphylococcus carnosus (strain TM300).